A 216-amino-acid polypeptide reads, in one-letter code: Refilin-B (216 aa).

The interval 1 to 52 (MVGRLSLQDVPELVDTKKKGDGVLDSPDSGLPPSPSPSHWGLAAATGGGGER) is disordered. Phosphoserine is present on residues Ser6 and Ser26.

Belongs to the Refilin family. As to quaternary structure, interacts with FLNA and FLNB.

It localises to the cytoplasm. Its subcellular location is the cytoskeleton. Involved in the regulation of the perinuclear actin network and nuclear shape through interaction with filamins. Plays an essential role in the formation of cartilaginous skeletal elements. The sequence is that of Refilin-B from Rattus norvegicus (Rat).